Reading from the N-terminus, the 504-residue chain is Tyrosine-protein kinase HCK (504 aa).

G2 carries N-myristoyl glycine lipidation. Residue C3 is the site of S-palmitoyl cysteine attachment. Position 15 is a phosphothreonine (T15). Y30 is subject to Phosphotyrosine. Positions 34 to 49 are enriched in polar residues; the sequence is PTSTIKPGPNSNNRNT. A disordered region spans residues 34–53; it reads PTSTIKPGPNSNNRNTPGIG. Positions 56–116 constitute an SH3 domain; the sequence is SEDIIVVALY…PSNYVARVDS (61 aa). The 98-residue stretch at 122 to 219 folds into the SH2 domain; that stretch reads WFFKGISRKD…GLCQKLSVPC (98 aa). T180 is subject to Phosphothreonine. The residue at position 187 (Y187) is a Phosphotyrosine. The region spanning 240–493 is the Protein kinase domain; the sequence is LKLEKKLGAG…YIQSVLDDFY (254 aa). ATP-binding positions include 246-254 and K268; that span reads LGAGQFGEV. Residue D359 is the Proton acceptor of the active site. Residue Y389 is modified to Phosphotyrosine; by autocatalysis. S440 carries the post-translational modification Phosphoserine. At Y500 the chain carries Phosphotyrosine.

It belongs to the protein kinase superfamily. Tyr protein kinase family. SRC subfamily. In terms of assembly, interacts with ADAM15. Interacts with FASLG. Interacts with ARRB1 and ARRB2. Interacts with FCGR1A; the interaction may be indirect. Interacts with IL6ST. Interacts (via SH3 domain) with ELMO1. Interacts (via SH3 domain) with TP73. Interacts with YAP1. Interacts with ABL1 and ITGB1, and thereby recruits ABL1 to activated ITGB1. Interacts (via SH2 domain) with FLT3 (tyrosine phosphorylated). Interacts with CBL. Interacts with VAV1, WAS and RAPGEF1. Interacts (via SH3 domain) with WDCP. Post-translationally, phosphorylated on several tyrosine residues. Autophosphorylated. Becomes rapidly phosphorylated upon activation of the immunoglobulin receptors FCGR1A and FCGR2A. Phosphorylation at Tyr-389 increases kinase activity. Phosphorylation at Tyr-500 inhibits kinase activity. Kinase activity is not required for phosphorylation at Tyr-500, suggesting that this site may be a target of other kinases. Ubiquitinated by CBL, leading to its degradation via the proteasome. In terms of processing, palmitoylation requires prior myristoylation. Palmitoylation is required for caveolar localization.

The protein localises to the cytoplasmic vesicle. It is found in the secretory vesicle. Its subcellular location is the cytoplasm. The protein resides in the cytosol. It localises to the cell membrane. The protein localises to the membrane. It is found in the caveola. Its subcellular location is the cell junction. The protein resides in the focal adhesion. It localises to the cytoskeleton. The protein localises to the golgi apparatus. It is found in the lysosome. Its subcellular location is the nucleus. The catalysed reaction is L-tyrosyl-[protein] + ATP = O-phospho-L-tyrosyl-[protein] + ADP + H(+). Its activity is regulated as follows. Subject to autoinhibition, mediated by intramolecular interactions involving the SH2 and SH3 domains. Kinase activity is also regulated by phosphorylation at regulatory tyrosine residues. Phosphorylation at Tyr-389 is required for optimal activity. Phosphorylation at Tyr-500 inhibits kinase activity. Functionally, non-receptor tyrosine-protein kinase found in hematopoietic cells that transmits signals from cell surface receptors and plays an important role in the regulation of innate immune responses, including neutrophil, monocyte, macrophage and mast cell functions, phagocytosis, cell survival and proliferation, cell adhesion and migration. Acts downstream of receptors that bind the Fc region of immunoglobulins, such as FCGR1A and FCGR2A, but also CSF3R, PLAUR, the receptors for IFNG, IL2, IL6 and IL8, and integrins, such as ITGB1 and ITGB2. During the phagocytic process, mediates mobilization of secretory lysosomes, degranulation, and activation of NADPH oxidase to bring about the respiratory burst. Plays a role in the release of inflammatory molecules. Promotes reorganization of the actin cytoskeleton and actin polymerization, formation of podosomes and cell protrusions. Inhibits TP73-mediated transcription activation and TP73-mediated apoptosis. Phosphorylates CBL in response to activation of immunoglobulin gamma Fc region receptors. Phosphorylates ADAM15, BCR, ELMO1, FCGR2A, GAB1, GAB2, RAPGEF1, STAT5B, TP73, VAV1 and WAS. This chain is Tyrosine-protein kinase HCK (HCK), found in Macaca fascicularis (Crab-eating macaque).